The following is a 185-amino-acid chain: Threonylcarbamoyl-AMP synthase (185 aa).

In terms of domain architecture, YrdC-like spans 7-185 (AAQRRAARAH…IDFASGRVLR (179 aa)).

This sequence belongs to the SUA5 family. TsaC subfamily.

The protein resides in the cytoplasm. It carries out the reaction L-threonine + hydrogencarbonate + ATP = L-threonylcarbamoyladenylate + diphosphate + H2O. Its function is as follows. Required for the formation of a threonylcarbamoyl group on adenosine at position 37 (t(6)A37) in tRNAs that read codons beginning with adenine. Catalyzes the conversion of L-threonine, HCO(3)(-)/CO(2) and ATP to give threonylcarbamoyl-AMP (TC-AMP) as the acyladenylate intermediate, with the release of diphosphate. The protein is Threonylcarbamoyl-AMP synthase of Laribacter hongkongensis (strain HLHK9).